A 417-amino-acid polypeptide reads, in one-letter code: Carboxypeptidase A2 (417 aa).

An N-terminal signal peptide occupies residues 1 to 16 (MRLTLLLAALLGYIYC). Positions 17–112 (QETFVGDQVL…EMLFNQQRER (96 aa)) are cleaved as a propeptide — activation peptide. In terms of domain architecture, Peptidase M14 spans 120–412 (AYHTLEEIYQ…LGLKTIMEHV (293 aa)). Zn(2+) is bound by residues His177 and Glu180. Substrate-binding positions include 177-180 (HARE), Arg235, and 252-253 (NR). The cysteines at positions 246 and 269 are disulfide-linked. Residue His304 coordinates Zn(2+). Residue 305–306 (SY) coordinates substrate. Residues Cys318 and Cys352 are joined by a disulfide bond. Tyr356 contributes to the substrate binding site. Glu378 serves as the catalytic Proton donor/acceptor.

This sequence belongs to the peptidase M14 family. Zn(2+) serves as cofactor.

It localises to the secreted. The catalysed reaction is Similar to that of carboxypeptidase A (EC 3.4.17.1), but with a preference for bulkier C-terminal residues.. Carboxypeptidase that catalyzes the release of a C-terminal amino acid, with a preference for large aromatic C-terminal residues. In Rattus norvegicus (Rat), this protein is Carboxypeptidase A2 (Cpa2).